The chain runs to 109 residues: Thioredoxin-like protein slr1139 (109 aa).

One can recognise a Thioredoxin domain in the interval 2–107 (SLLEITDAEF…LLELLKEELD (106 aa)). Cysteines 31 and 34 form a disulfide.

This sequence belongs to the thioredoxin family.

The sequence is that of Thioredoxin-like protein slr1139 from Synechocystis sp. (strain ATCC 27184 / PCC 6803 / Kazusa).